The following is a 312-amino-acid chain: 2,3-dihydroxyphenylpropionate/2,3-dihydroxicinnamic acid 1,2-dioxygenase (312 aa).

H115 serves as the catalytic Proton donor. Residue H179 is the Proton acceptor of the active site.

This sequence belongs to the LigB/MhpB extradiol dioxygenase family. As to quaternary structure, homotetramer. The cofactor is Fe(2+).

The catalysed reaction is 3-(2,3-dihydroxyphenyl)propanoate + O2 = (2Z,4E)-2-hydroxy-6-oxonona-2,4-dienedioate + H(+). It catalyses the reaction (2E)-3-(2,3-dihydroxyphenyl)prop-2-enoate + O2 = (2Z,4E,7E)-2-hydroxy-6-oxonona-2,4,7-trienedioate + H(+). It participates in aromatic compound metabolism; 3-phenylpropanoate degradation. Functionally, catalyzes the non-heme iron(II)-dependent oxidative cleavage of 2,3-dihydroxyphenylpropionic acid and 2,3-dihydroxicinnamic acid into 2-hydroxy-6-ketononadienedioate and 2-hydroxy-6-ketononatrienedioate, respectively. This chain is 2,3-dihydroxyphenylpropionate/2,3-dihydroxicinnamic acid 1,2-dioxygenase, found in Mycolicibacterium paratuberculosis (strain ATCC BAA-968 / K-10) (Mycobacterium paratuberculosis).